The sequence spans 206 residues: Cytidylate kinase (206 aa).

Position 9–17 (9–17 (GPAAAGKGT)) interacts with ATP.

This sequence belongs to the cytidylate kinase family. Type 1 subfamily.

The protein resides in the cytoplasm. The enzyme catalyses CMP + ATP = CDP + ADP. It carries out the reaction dCMP + ATP = dCDP + ADP. This Cereibacter sphaeroides (strain ATCC 17023 / DSM 158 / JCM 6121 / CCUG 31486 / LMG 2827 / NBRC 12203 / NCIMB 8253 / ATH 2.4.1.) (Rhodobacter sphaeroides) protein is Cytidylate kinase.